We begin with the raw amino-acid sequence, 290 residues long: MADSDAQETRPPAKDSPFSIKNLLNIEDKPTKPKNGLGSSKGVFESGFFSRLGDLSLPRFELPAQRIGLPAQYLERASAWWYPYALGTHFRTAGAEKVNQRETSPILDRHTPDPPKSDQESKEESADDEIALEESDAEEPKKETDQEDDWMRKGEDLESDKKPCRKKKTRTVFSRSQVFQLESTFDIKRYLSSSERAGLAASLHLTETQVKIWFQNRRNKWKRQLAAELEAANMSHAAAQRIVRVPILYHDSGAPEATGGPGTNSPGGQPLLSFPHHMYYSNAVPLLRPV.

2 disordered regions span residues 1–41 (MADS…GSSK) and 96–169 (EKVN…KKKT). Residues 107-124 (LDRHTPDPPKSDQESKEE) are compositionally biased toward basic and acidic residues. A compositionally biased stretch (acidic residues) spans 125–137 (SADDEIALEESDA). Basic and acidic residues predominate over residues 138 to 162 (EEPKKETDQEDDWMRKGEDLESDKK). The homeobox DNA-binding region spans 166-225 (KKKTRTVFSRSQVFQLESTFDIKRYLSSSERAGLAASLHLTETQVKIWFQNRRNKWKRQL).

It belongs to the HMX homeobox family. In terms of tissue distribution, expressed in the ear placode and vesicle and in cells forming the vestibulo-acoustic ganglion.

Its subcellular location is the nucleus. In terms of biological role, transcription factor involved in specification of neuronal cell types and which is required for inner ear and hypothalamus development. Binds to the 5'-CAAGTG-3' core sequence. The polypeptide is Homeobox protein HMX3-B (hmx3b) (Oryzias latipes (Japanese rice fish)).